The following is an 876-amino-acid chain: Leucine--tRNA ligase (876 aa).

The short motif at 42-52 (PYPSGKLHMGH) is the 'HIGH' region element. The 'KMSKS' region motif lies at 634-638 (KMSKS). Lysine 637 is an ATP binding site.

It belongs to the class-I aminoacyl-tRNA synthetase family.

The protein resides in the cytoplasm. The enzyme catalyses tRNA(Leu) + L-leucine + ATP = L-leucyl-tRNA(Leu) + AMP + diphosphate. The chain is Leucine--tRNA ligase from Neisseria meningitidis serogroup C (strain 053442).